The sequence spans 288 residues: Beta-lactamase PSE-4 (288 aa).

Positions 1 to 17 (MKFLLAFSLLIPSVVFA) are cleaved as a signal peptide. Residue Ser-65 is the Acyl-ester intermediate of the active site. A disulfide bond links Cys-72 and Cys-118. 229-231 (RSG) serves as a coordination point for substrate.

This sequence belongs to the class-A beta-lactamase family.

It carries out the reaction a beta-lactam + H2O = a substituted beta-amino acid. Hydrolyzes both carbenicillin and oxacillin. This Pseudomonas aeruginosa protein is Beta-lactamase PSE-4 (pse4).